The chain runs to 115 residues: Dolichyl-diphosphooligosaccharide--protein glycosyltransferase subunit DAD1 (115 aa).

Residues 1–31 (MARSTSKDAQALIQSLRSAYAATPSNLKIID) lie on the Cytoplasmic side of the membrane. A helical transmembrane segment spans residues 32 to 52 (LYVVFAVFTALIQVVYMAIVG). Residues 53–55 (SFP) lie on the Lumenal side of the membrane. A helical membrane pass occupies residues 56-76 (FNAFLSGLLSCIGTAVLAVCL). The Cytoplasmic segment spans residues 77–94 (RIQVNKENKEFKDLAPER). A helical transmembrane segment spans residues 95–115 (AFADFVLCNLVLHLVIMNFLG).

Belongs to the DAD/OST2 family. In terms of assembly, component of the oligosaccharyltransferase (OST) complex.

Its subcellular location is the endoplasmic reticulum membrane. It functions in the pathway protein modification; protein glycosylation. In terms of biological role, subunit of the oligosaccharyl transferase (OST) complex that catalyzes the initial transfer of a defined glycan (Glc(3)Man(9)GlcNAc(2) in eukaryotes) from the lipid carrier dolichol-pyrophosphate to an asparagine residue within an Asn-X-Ser/Thr consensus motif in nascent polypeptide chains, the first step in protein N-glycosylation. N-glycosylation occurs cotranslationally and the complex associates with the Sec61 complex at the channel-forming translocon complex that mediates protein translocation across the endoplasmic reticulum (ER). All subunits are required for a maximal enzyme activity. The chain is Dolichyl-diphosphooligosaccharide--protein glycosyltransferase subunit DAD1 (DAD1) from Betula pendula (European white birch).